Reading from the N-terminus, the 211-residue chain is tRNA (guanine-N(7)-)-methyltransferase (211 aa).

4 residues coordinate S-adenosyl-L-methionine: Glu-43, Asp-68, Asn-95, and Asn-117. Residue Lys-121 participates in substrate binding. The interaction with RNA stretch occupies residues 123 to 128; that stretch reads RHNKRR. Substrate-binding positions include Asp-153 and 190–193; that span reads TEYE.

Belongs to the class I-like SAM-binding methyltransferase superfamily. TrmB family.

The enzyme catalyses guanosine(46) in tRNA + S-adenosyl-L-methionine = N(7)-methylguanosine(46) in tRNA + S-adenosyl-L-homocysteine. It participates in tRNA modification; N(7)-methylguanine-tRNA biosynthesis. Functionally, catalyzes the formation of N(7)-methylguanine at position 46 (m7G46) in tRNA. This is tRNA (guanine-N(7)-)-methyltransferase from Clostridium tetani (strain Massachusetts / E88).